Consider the following 3333-residue polypeptide: Laminin subunit alpha-3 (3333 aa).

A signal peptide spans 1-35; the sequence is MAAAARPRGRALGPVLPPTPLLLLVLRVLPACGAT. The region spanning 43-298 is the Laminin N-terminal domain; the sequence is AGLSLHPTYF…SIKDISIGGQ (256 aa). N-linked (GlcNAc...) asparagine glycosylation is found at Asn142 and Asn242. Residues 298–728 are domain V; sequence QCVCNGHAEV…NNYYFPDLHH (431 aa). Cystine bridges form between Cys299-Cys308, Cys301-Cys319, Cys321-Cys330, Cys333-Cys353, Cys356-Cys365, Cys358-Cys390, Cys393-Cys402, Cys405-Cys423, Cys426-Cys436, Cys428-Cys443, Cys445-Cys454, Cys457-Cys467, Cys491-Cys503, Cys493-Cys509, Cys511-Cys520, Cys523-Cys533, Cys536-Cys548, Cys538-Cys555, Cys557-Cys566, Cys569-Cys586, Cys601-Cys610, Cys613-Cys628, Cys631-Cys645, Cys633-Cys652, Cys654-Cys663, Cys666-Cys681, Cys684-Cys696, Cys686-Cys703, and Cys705-Cys714. Laminin EGF-like domains are found at residues 299-355, 356-425, 426-469, 491-535, 536-588, 590-630, 631-683, and 684-728; these read CVCN…ECEA, CNCH…GCIP, CSCD…FCLR, CDCN…ICQA, CWCS…ACDP, GTIN…GCSE, CKCH…GCQG, and CQCD…DLHH. A domain IV 1 (domain IV B) region spans residues 796–1265; it reads TEAVSGHITI…VAFYHKGALP (470 aa). Intrachain disulfides connect Cys1266/Cys1278, Cys1268/Cys1285, Cys1287/Cys1296, Cys1299/Cys1309, Cys1312/Cys1319, Cys1314/Cys1326, Cys1328/Cys1337, Cys1340/Cys1353, Cys1356/Cys1371, Cys1358/Cys1378, Cys1380/Cys1389, Cys1392/Cys1402, Cys1405/Cys1417, Cys1407/Cys1424, Cys1426/Cys1435, and Cys1438/Cys1453. Laminin EGF-like domains lie at 1266–1311, 1312–1355, 1356–1404, and 1405–1455; these read CECH…RCKP, CSCG…GCEG, CNCS…ECVP, and CNCN…GCTS. Residues 1266–1465 are domain III B; the sequence is CECHPTGATG…CFCFGVNNQC (200 aa). One can recognise a Laminin IV type A domain in the interval 1476–1653; the sequence is VDMLGWHLET…SGRIALAVEI (178 aa). Residues 1654–1821 are domain III A; the sequence is CACPPAYAGD…DSSPAEECDD (168 aa). Intrachain disulfides connect Cys1687-Cys1696, Cys1689-Cys1703, Cys1706-Cys1715, Cys1718-Cys1731, Cys1734-Cys1746, Cys1736-Cys1755, Cys1757-Cys1766, and Cys1769-Cys1784. Laminin EGF-like domains are found at residues 1687 to 1733 and 1734 to 1786; these read CNCN…SCRA and CPCP…SCQP. The Laminin EGF-like 15; truncated domain maps to 1787 to 1821; the sequence is CSCNSNGQLGSCHPLTGDCINQEPKDSSPAEECDD. The domain II and I stretch occupies residues 1822-2389; that stretch reads CDSCVMTLLN…ARDAASKVAV (568 aa). Coiled-coil stretches lie at residues 1852–1941 and 1987–2169; these read ASAG…KNVI and KHLR…DELV. Positions 2278–2280 match the Cell attachment site motif; sequence RGD. Positions 2322–2388 form a coiled coil; the sequence is RTQNEDFKKA…QARDAASKVA (67 aa). Asn2365, Asn2502, and Asn2584 each carry an N-linked (GlcNAc...) asparagine glycan. Laminin G-like domains lie at 2390-2591, 2598-2760, 2767-2927, 2986-3150, and 3157-3330; these read PMRF…VEPC, SDKN…TKKC, VRSA…LGGC, ALQF…VSSC, and KGIY…LNGC. Intrachain disulfides connect Cys2561/Cys2591, Cys2737/Cys2760, Cys2895/Cys2927, Cys3127/Cys3150, and Cys3302/Cys3330.

In terms of assembly, laminin is a complex glycoprotein, consisting of three different polypeptide chains (alpha, beta, gamma), which are bound to each other by disulfide bonds into a cross-shaped molecule comprising one long and three short arms with globules at each end. Alpha-3 is a subunit of laminin-5 (laminin-332 or epiligrin/kalinin/nicein), laminin-6 (laminin-311 or K-laminin) and laminin-7 (laminin-321 or KS-laminin). Skin; respiratory, urinary, and digestive epithelia and in other specialized tissues with prominent secretory or protective functions. Epithelial basement membrane, and epithelial cell tongue that migrates into a wound bed. A differential and focal expression of the subunit alpha-3 is observed in the CNS.

The protein localises to the secreted. The protein resides in the extracellular space. It is found in the extracellular matrix. It localises to the basement membrane. Functionally, binding to cells via a high affinity receptor, laminin is thought to mediate the attachment, migration and organization of cells into tissues during embryonic development by interacting with other extracellular matrix components. Laminin-5 is thought to be involved in (1) cell adhesion via integrin alpha-3/beta-1 in focal adhesion and integrin alpha-6/beta-4 in hemidesmosomes, (2) signal transduction via tyrosine phosphorylation of pp125-FAK and p80, (3) differentiation of keratinocytes. This is Laminin subunit alpha-3 (LAMA3) from Homo sapiens (Human).